The chain runs to 513 residues: Flavonoid 3',5'-hydroxylase (513 aa).

Residue cysteine 446 coordinates heme.

Belongs to the cytochrome P450 family. It depends on heme as a cofactor. Hypocotyl tissues.

It catalyses the reaction a 3',5'-unsubstituted flavanone + 2 reduced [NADPH--hemoprotein reductase] + 2 O2 = a 3',5'-dihydroxyflavanone + 2 oxidized [NADPH--hemoprotein reductase] + 2 H2O + 2 H(+). Its pathway is pigment biosynthesis; anthocyanin biosynthesis. Functionally, catalyzes the 3'5'-hydroxylation of naringenin and eriodictyol to form 5,7,3,'4',5'-pentahydroxyflavanone and 3',5'-hydroxylation of dihydrokaempferol and dihydroquercetin to form dihydromyricetin. This is Flavonoid 3',5'-hydroxylase (CYP75A2) from Solanum melongena (Eggplant).